A 269-amino-acid polypeptide reads, in one-letter code: MESSKDTQHGDALESKSCLANRTSSRQNKRTSLSSSDGTGPRVTESLGLPRVLTPSDTAAELGQKTSSSSSSSSSSAQSNRSSKVSLPEIPKEKYPEEFSLLNSQTEDGQRPEWTFYPRFSSNIHTYHIGKQCFFNGVFRGNRRSVAERTVDNSLGKKKYDIDPRNGIPKLTPGDNPYMFPEQSKEFFKAGATLPPVNFSLGPYEKKFDTFIPLEPLPKIPNLPFWEKEKANNLKNEIKEVEELDNWQVPMPFLHGFFSTGASNFSRQQ.

Residues 1-14 (MESSKDTQHGDALE) show a composition bias toward basic and acidic residues. Residues 1–92 (MESSKDTQHG…SKVSLPEIPK (92 aa)) are disordered. Residues 18 to 38 (CLANRTSSRQNKRTSLSSSDG) show a composition bias toward polar residues. At Thr54 the chain carries Phosphothreonine. Over residues 67–86 (SSSSSSSSSSAQSNRSSKVS) the composition is skewed to low complexity. A phosphoserine mark is found at Ser72, Ser75, and Ser82.

The chain is Spermatogenesis-associated serine-rich protein 1 (Spats1) from Mus musculus (Mouse).